We begin with the raw amino-acid sequence, 507 residues long: MVTIRADEISNIIRERIEKYNREVKVVNTGTVLQVGDGIARIHGLDEVMAGELVEFEERTIGIALNLESNNVGVVLMGDGLLIQEGSSVKATGRIAQIPVSDAYLGRVINALAKPIDGRGEISTSESRLIESPAPGIISRRSVYEPLQTGLIAIDSMIPIGRGQRELIIGDRQTGKTAVATDTILNQQGQNVICVYVAIGQKASSVAQVVNMFQERGAMEYTIVVAETADSPATLQYLAPYTGAALAEYFMYRERHTLIIYDDLSKQAQAYRQMSLLLRRPPGREAYPGDVFYLHSRLLERAAKSSSFLGEGSMTALPIVETQSGDVSAYIPTNVISITDGQIFLSADLFNAGIRPAINVGISVSRVGSAAQIKAMKQVAGKLKLELAQFAELEAFAQFASDLDKATQNQLARGQRLRELLKQPQSAPLTVEEQIMTIYTGTNGYLDSLEIGQVRKFIVELRTYLKTNKSQFQEIISSTKTFTEEAEALLKEAIQEQMERFLLQEQA.

170-177 is an ATP binding site; that stretch reads GDRQTGKT.

Belongs to the ATPase alpha/beta chains family. As to quaternary structure, F-type ATPases have 2 components, CF(1) - the catalytic core - and CF(0) - the membrane proton channel. CF(1) has five subunits: alpha(3), beta(3), gamma(1), delta(1), epsilon(1). CF(0) has four main subunits: a, b, b' and c.

Its subcellular location is the plastid. It localises to the chloroplast thylakoid membrane. It carries out the reaction ATP + H2O + 4 H(+)(in) = ADP + phosphate + 5 H(+)(out). Its function is as follows. Produces ATP from ADP in the presence of a proton gradient across the membrane. The alpha chain is a regulatory subunit. This chain is ATP synthase subunit alpha, chloroplastic, found in Silene latifolia (White campion).